The sequence spans 382 residues: Mannitol-1-phosphate 5-dehydrogenase (382 aa).

Residue 3–14 coordinates NAD(+); the sequence is AVHFGAGNIGRG.

Belongs to the mannitol dehydrogenase family.

The catalysed reaction is D-mannitol 1-phosphate + NAD(+) = beta-D-fructose 6-phosphate + NADH + H(+). The protein is Mannitol-1-phosphate 5-dehydrogenase of Exiguobacterium sp. (strain ATCC BAA-1283 / AT1b).